A 1533-amino-acid polypeptide reads, in one-letter code: MGHSKQIRILLLNEMEKLEKTLFRLEQGFELQFRLGPTLQGKAVTVYTNYPFPGETFNREKFRSLEWENPTEREDDSDKYCKLNLQQAGSFQYYFLQGNEKSGGGYIVVDPILYVGADNHVLPLDCVTLQTFLAKCLGPFDEWESRLRVAKESGYNMIHFTPLQTLGLSRSCYSLANQLELNPDFSRPNKKYTWSDVGQLVEKMKKEWNVLCITDVVYNHTAANSKWIQEHPESAYNLVNSPHLKPAWVLDRALWHLSCDVAEGKYKEKGVPALIENDHQMNCIRKIIWEDIFPKIQLWEFFQVDVYKAVEQFRRLLTQENRKITTKPDPKEHLKIIQDPEYRRLGCTVDMNIALATFIPHDKGPAAIDECCNWFRKRIEELNSEKHQLVNYHQEQAVNCLLGNVFYERMAGHGPKLGPVTRKHPLVTRYFTFPFEEMTVSTEESMIHNPNKACFLMAHNGWVMGDDPLRNFAEPGSEVYLRRELICWGDSVKLRYGNKPEDCPYLWAHMKKYTEITATYFQGVRLDNCHSTPLHVAEYMLDAARKLQPNLYVVAELFTGSEDLDNIFVTRLGISSLIREAMSAYNSHEEGRLVYRYGGEPVGSFVQPCLRPLMPAIAHALFMDITHDNECPIVHRSEYDALPSTTIVSMACCASGSTKGYDELVPHQISVVSEERFYTKWNPGASPSNTGEVNFQSGIIAARCAINKLHQELGAQGFIQVYVDQVDEDIVAVTRHSPSIHQSVVSVSRTAFRNPKTSFYSKEVPQMCIPGKIEEVVLEARTIERNTKPYQKDKNSINGMPNITVEIREHIQLSESKIVKQAGVATKGPNEYIQEIEFENLSPGSVIIFRVSLDPHAQVAVGILRNHLTQFSPHFKSGSLAVENSDPILKIPFAFIASKLTLAELNQVLYRCEAEEQEDGGGCYDIPNWSSLKYAGLQGLMSVLAEIRPKNDLGHPFCDNLRSGDWMIDYVSNRLISRSGTIAEVGKWFQAMFFYLKQIPRYLIPCYFDAILIGAYTTLLDIAWKQMSSFVQNGSTFVKHLSLGSVQMCGVGKCPSLPLLSPSLMDVPYRLNEITKEKEQCCVSLAAGLPHFSSGIFRCWGRDTFIALRGLLLITGRYLEARNIILAFAGTLRHGLIPNLLGEGTYARYNCRDAVWWWLQCIQDYCKMVPNGLDILKCPVSRMYPTDDSVPLSAGTLDQPLFEVIQEVMQRHIQGIQFRERNAGPQIDRNMKDEGFNITAGVDEETGFVYGGNRLNCGTWMDKMGESDRARNRGIPATPRDGSAVEIVGLSKSTVRWLLELSKKRIFPYHEVRVKRHGKVVTISYDEWNKKIQDNFEKLFHVSEDPXDFNEKHPNLVHKRGIYKDSYGASSPWCDYQLRPNFTIAMVVAPELFTAEKAWKALEIAEKKLLGPLGMKTLDPDDMVYCGIYDNALDNDNYNLAKGFNYHQGPEWLWPVGYFLRAKLYFSKLMGPEANAKTVFLVKNILSRHYVHLERSPWKGLPELTNENGQYCPFSCETQAWSIATVLETLYDL.

Position 64 is a phosphoserine (S64). Residues D527, H530, and D628 contribute to the active site.

Belongs to the glycogen debranching enzyme family. In terms of assembly, monomer. Interacts with NHLRC1/malin. Ubiquitinated.

Its subcellular location is the cytoplasm. It catalyses the reaction Transfers a segment of a (1-&gt;4)-alpha-D-glucan to a new position in an acceptor, which may be glucose or a (1-&gt;4)-alpha-D-glucan.. It carries out the reaction Hydrolysis of (1-&gt;6)-alpha-D-glucosidic branch linkages in glycogen phosphorylase limit dextrin.. Multifunctional enzyme acting as 1,4-alpha-D-glucan:1,4-alpha-D-glucan 4-alpha-D-glycosyltransferase and amylo-1,6-glucosidase in glycogen degradation. The protein is Glycogen debranching enzyme (AGL) of Canis lupus familiaris (Dog).